The following is a 370-amino-acid chain: Galactose-1-phosphate uridylyltransferase (370 aa).

Positions 51 and 54 each coordinate Zn(2+). UDP-alpha-D-glucose is bound by residues alanine 60 and 76–77; that span reads NG. Histidine 121 contacts Zn(2+). Residue asparagine 166 coordinates UDP-alpha-D-glucose. Position 177 (histidine 177) interacts with Zn(2+). The active-site Tele-UMP-histidine intermediate is histidine 179. Glutamine 181 lines the UDP-alpha-D-glucose pocket. Fe cation contacts are provided by glutamate 195, histidine 294, histidine 311, and histidine 313. Residues 326-329 and 331-332 contribute to the UDP-alpha-D-glucose site; these read KFLV and FE.

Belongs to the galactose-1-phosphate uridylyltransferase type 1 family. In terms of assembly, homodimer. It depends on Zn(2+) as a cofactor.

It carries out the reaction alpha-D-galactose 1-phosphate + UDP-alpha-D-glucose = alpha-D-glucose 1-phosphate + UDP-alpha-D-galactose. Its pathway is carbohydrate metabolism; galactose metabolism. The polypeptide is Galactose-1-phosphate uridylyltransferase (GAL7) (Kluyveromyces lactis (strain ATCC 8585 / CBS 2359 / DSM 70799 / NBRC 1267 / NRRL Y-1140 / WM37) (Yeast)).